Here is a 180-residue protein sequence, read N- to C-terminus: Nudix hydrolase 16, mitochondrial (180 aa).

The region spanning 18–162 (GSRLVAGCIP…WMKDALVEGF (145 aa)) is the Nudix hydrolase domain. A substrate-binding site is contributed by Phe60. Mn(2+) contacts are provided by Gly63, Glu78, Glu82, and Glu144. Positions 63-84 (GGWENDETVREAAAREAVEEAG) match the Nudix box motif.

It belongs to the Nudix hydrolase family. Mg(2+) serves as cofactor. Mn(2+) is required as a cofactor. In terms of tissue distribution, expressed in roots, leaves, stems and inflorescences.

It localises to the mitochondrion. Functionally, probably mediates the hydrolysis of some nucleoside diphosphate derivatives. This is Nudix hydrolase 16, mitochondrial (NUDT16) from Arabidopsis thaliana (Mouse-ear cress).